A 386-amino-acid polypeptide reads, in one-letter code: Histidinol-phosphate aminotransferase (386 aa).

Residues 1–11 (MMVRKSTASNR) are compositionally biased toward polar residues. The tract at residues 1 to 22 (MMVRKSTASNRRLQDKGDEEPV) is disordered. Residue Lys248 is modified to N6-(pyridoxal phosphate)lysine.

It belongs to the class-II pyridoxal-phosphate-dependent aminotransferase family. Histidinol-phosphate aminotransferase subfamily. As to quaternary structure, homodimer. It depends on pyridoxal 5'-phosphate as a cofactor.

The catalysed reaction is L-histidinol phosphate + 2-oxoglutarate = 3-(imidazol-4-yl)-2-oxopropyl phosphate + L-glutamate. Its pathway is amino-acid biosynthesis; L-histidine biosynthesis; L-histidine from 5-phospho-alpha-D-ribose 1-diphosphate: step 7/9. The protein is Histidinol-phosphate aminotransferase of Moorella thermoacetica (strain ATCC 39073 / JCM 9320).